We begin with the raw amino-acid sequence, 557 residues long: Dihydroxy-acid dehydratase (557 aa).

D78 lines the Mg(2+) pocket. C119 serves as a coordination point for [2Fe-2S] cluster. D120 and K121 together coordinate Mg(2+). The residue at position 121 (K121) is an N6-carboxylysine. C192 serves as a coordination point for [2Fe-2S] cluster. E442 serves as a coordination point for Mg(2+). Residue S468 is the Proton acceptor of the active site.

Belongs to the IlvD/Edd family. Homodimer. It depends on [2Fe-2S] cluster as a cofactor. The cofactor is Mg(2+).

The catalysed reaction is (2R)-2,3-dihydroxy-3-methylbutanoate = 3-methyl-2-oxobutanoate + H2O. It carries out the reaction (2R,3R)-2,3-dihydroxy-3-methylpentanoate = (S)-3-methyl-2-oxopentanoate + H2O. It participates in amino-acid biosynthesis; L-isoleucine biosynthesis; L-isoleucine from 2-oxobutanoate: step 3/4. It functions in the pathway amino-acid biosynthesis; L-valine biosynthesis; L-valine from pyruvate: step 3/4. In terms of biological role, functions in the biosynthesis of branched-chain amino acids. Catalyzes the dehydration of (2R,3R)-2,3-dihydroxy-3-methylpentanoate (2,3-dihydroxy-3-methylvalerate) into 2-oxo-3-methylpentanoate (2-oxo-3-methylvalerate) and of (2R)-2,3-dihydroxy-3-methylbutanoate (2,3-dihydroxyisovalerate) into 2-oxo-3-methylbutanoate (2-oxoisovalerate), the penultimate precursor to L-isoleucine and L-valine, respectively. The chain is Dihydroxy-acid dehydratase from Bacillus cytotoxicus (strain DSM 22905 / CIP 110041 / 391-98 / NVH 391-98).